A 284-amino-acid polypeptide reads, in one-letter code: tRNA pseudouridine synthase A (284 aa).

Catalysis depends on Asp-62, which acts as the Nucleophile. Tyr-120 provides a ligand contact to substrate.

This sequence belongs to the tRNA pseudouridine synthase TruA family. In terms of assembly, homodimer.

The catalysed reaction is uridine(38/39/40) in tRNA = pseudouridine(38/39/40) in tRNA. Formation of pseudouridine at positions 38, 39 and 40 in the anticodon stem and loop of transfer RNAs. The sequence is that of tRNA pseudouridine synthase A from Thermosynechococcus vestitus (strain NIES-2133 / IAM M-273 / BP-1).